The sequence spans 118 residues: U16-barytoxin-Tl1c (118 aa).

Residues 1-16 (MKTIIVFLSFLVLVLA) form the signal peptide. A propeptide spanning residues 17-76 (TKFGDANEGVNREQTKEVIQNEFRGDFLNEMAAMSLLQQLEAIESALLEKEADRNSRQKR) is cleaved from the precursor. Disulfide bonds link C77–C92, C84–C97, and C91–C112.

Belongs to the neurotoxin 14 (magi-1) family. 06 (ICK-Trit) subfamily. Expressed by the venom gland.

The protein resides in the secreted. Its function is as follows. Ion channel inhibitor. The polypeptide is U16-barytoxin-Tl1c (Trittame loki (Brush-footed trapdoor spider)).